Consider the following 255-residue polypeptide: uncharacterized protein (255 aa).

2 N-linked (GlcNAc...) asparagine; by host glycosylation sites follow: Asn16 and Asn58. 2 consecutive transmembrane segments (helical) span residues 72–92 (LIYS…TIYY) and 104–124 (LWYI…SHIC).

Its subcellular location is the membrane. This is an uncharacterized protein from Acanthamoeba polyphaga (Amoeba).